The following is a 1455-amino-acid chain: DNA-directed RNA polymerase subunit beta (1455 aa).

Belongs to the RNA polymerase beta chain family. The RNAP catalytic core consists of 2 alpha, 1 beta, 1 beta' and 1 omega subunit. When a sigma factor is associated with the core the holoenzyme is formed, which can initiate transcription.

It catalyses the reaction RNA(n) + a ribonucleoside 5'-triphosphate = RNA(n+1) + diphosphate. Its function is as follows. DNA-dependent RNA polymerase catalyzes the transcription of DNA into RNA using the four ribonucleoside triphosphates as substrates. This is DNA-directed RNA polymerase subunit beta from Rhizorhabdus wittichii (strain DSM 6014 / CCUG 31198 / JCM 15750 / NBRC 105917 / EY 4224 / RW1) (Sphingomonas wittichii).